The sequence spans 447 residues: Biotin carboxylase (447 aa).

In terms of domain architecture, Biotin carboxylation spans 1–447 (MKFDKILIAN…STSFVQEMNK (447 aa)). ATP is bound by residues Lys117, Lys159, 165–166 (GG), 201–204 (EKFI), and His209. One can recognise an ATP-grasp domain in the interval 121–318 (KETMQKAGVP…LLVEQIRIAQ (198 aa)). Lys238 is a binding site for hydrogencarbonate. Residues Glu276 and Glu289 each coordinate ATP. Mg(2+) contacts are provided by Glu276, Glu289, and Asn291. Residues Glu276, Glu289, and Asn291 each coordinate Mn(2+). Hydrogencarbonate-binding residues include Arg293, Val296, and Arg339. Residue Arg293 is part of the active site. Residue Arg339 participates in biotin binding.

In terms of assembly, acetyl-CoA carboxylase is a heterohexamer of biotin carboxyl carrier protein, biotin carboxylase and the two subunits of carboxyl transferase in a 2:2 complex. Requires Mg(2+) as cofactor. It depends on Mn(2+) as a cofactor.

It catalyses the reaction N(6)-biotinyl-L-lysyl-[protein] + hydrogencarbonate + ATP = N(6)-carboxybiotinyl-L-lysyl-[protein] + ADP + phosphate + H(+). It functions in the pathway lipid metabolism; malonyl-CoA biosynthesis; malonyl-CoA from acetyl-CoA: step 1/1. This protein is a component of the acetyl coenzyme A carboxylase complex; first, biotin carboxylase catalyzes the carboxylation of the carrier protein and then the transcarboxylase transfers the carboxyl group to form malonyl-CoA. This Nostoc sp. (strain PCC 7120 / SAG 25.82 / UTEX 2576) protein is Biotin carboxylase (accC).